Here is an 868-residue protein sequence, read N- to C-terminus: Leucine--tRNA ligase (868 aa).

The 'HIGH' region signature appears at 42-52 (PYPSGKLHMGH). Residues 627–631 (KMAKS) carry the 'KMSKS' region motif. Residue K630 coordinates ATP.

It belongs to the class-I aminoacyl-tRNA synthetase family.

It localises to the cytoplasm. It carries out the reaction tRNA(Leu) + L-leucine + ATP = L-leucyl-tRNA(Leu) + AMP + diphosphate. In Pseudomonas fluorescens (strain ATCC BAA-477 / NRRL B-23932 / Pf-5), this protein is Leucine--tRNA ligase.